Consider the following 226-residue polypeptide: Transmembrane protein 204 (226 aa).

At 1–5 (MTVQR) the chain is on the cytoplasmic side. The helical transmembrane segment at 6–26 (LVAAAVLVALVSLILNNVAAF) threads the bilayer. Residues 27-103 (TSNWVCQTLE…LQFDMMRACN (77 aa)) are Extracellular-facing. Residues 104 to 124 (LVATAALTAGQLTFLLGLVGL) traverse the membrane as a helical segment. Over 125-136 (PLLSPDAPCWEE) the chain is Cytoplasmic. Residues 137-157 (AMAAAFQLASFVLVIGLVTFY) form a helical membrane-spanning segment. The Extracellular segment spans residues 158-170 (RIGPYTNLSWSCY). Asn-164 carries an N-linked (GlcNAc...) asparagine glycan. A helical membrane pass occupies residues 171–191 (LNIGACLLATLAAAMLIWNIL). Topologically, residues 192–226 (HKREDCMAPRVIVISRSLTARFRRGLDNDYVESPC) are cytoplasmic.

In terms of tissue distribution, highly expressed in lung, heart, kidney and placenta. Lower expression in thymus, spleen, liver, testis and ovary. Expressed in endothelial and restricted epithelial cell populations.

Its subcellular location is the cell junction. The protein localises to the adherens junction. It is found in the cell membrane. Its function is as follows. Can influence paracellular permeability. Appears to be involved in cell-cell interactions through adherens. The sequence is that of Transmembrane protein 204 (TMEM204) from Homo sapiens (Human).